The following is a 203-amino-acid chain: LexA repressor (203 aa).

The H-T-H motif DNA-binding region spans 30 to 50 (VREICQAVSLKSTSTVHGHLK). Active-site for autocatalytic cleavage activity residues include Ser-127 and Lys-164.

It belongs to the peptidase S24 family. In terms of assembly, homodimer.

The enzyme catalyses Hydrolysis of Ala-|-Gly bond in repressor LexA.. Its function is as follows. Represses a number of genes involved in the response to DNA damage (SOS response), including recA and lexA. In the presence of single-stranded DNA, RecA interacts with LexA causing an autocatalytic cleavage which disrupts the DNA-binding part of LexA, leading to derepression of the SOS regulon and eventually DNA repair. This is LexA repressor from Clostridium perfringens (strain 13 / Type A).